The sequence spans 519 residues: Cysteine--tRNA ligase (519 aa).

C30 contributes to the Zn(2+) binding site. Positions 32-42 (PTVYDRAHLGN) match the 'HIGH' region motif. 3 residues coordinate Zn(2+): C221, H253, and E257. A 'KMSKS' region motif is present at residues 286 to 290 (KMSKS). K289 provides a ligand contact to ATP.

The protein belongs to the class-I aminoacyl-tRNA synthetase family. As to quaternary structure, monomer. Zn(2+) is required as a cofactor.

The protein localises to the cytoplasm. It catalyses the reaction tRNA(Cys) + L-cysteine + ATP = L-cysteinyl-tRNA(Cys) + AMP + diphosphate. This chain is Cysteine--tRNA ligase, found in Cereibacter sphaeroides (strain KD131 / KCTC 12085) (Rhodobacter sphaeroides).